The primary structure comprises 264 residues: Orotidine 5'-phosphate decarboxylase (264 aa).

Substrate-binding positions include aspartate 40, 62 to 64 (KTH), 93 to 102 (DRKFADIGNT), tyrosine 214, and arginine 233. Lysine 95 functions as the Proton donor in the catalytic mechanism.

Belongs to the OMP decarboxylase family.

The catalysed reaction is orotidine 5'-phosphate + H(+) = UMP + CO2. It functions in the pathway pyrimidine metabolism; UMP biosynthesis via de novo pathway; UMP from orotate: step 2/2. The chain is Orotidine 5'-phosphate decarboxylase (ura4) from Schizosaccharomyces pombe (strain 972 / ATCC 24843) (Fission yeast).